Here is a 465-residue protein sequence, read N- to C-terminus: Light-independent protochlorophyllide reductase subunit N (465 aa).

[4Fe-4S] cluster contacts are provided by C22, C47, and C107.

The protein belongs to the BchN/ChlN family. In terms of assembly, protochlorophyllide reductase is composed of three subunits; ChlL, ChlN and ChlB. Forms a heterotetramer of two ChlB and two ChlN subunits. It depends on [4Fe-4S] cluster as a cofactor.

The protein localises to the plastid. It localises to the chloroplast. It catalyses the reaction chlorophyllide a + oxidized 2[4Fe-4S]-[ferredoxin] + 2 ADP + 2 phosphate = protochlorophyllide a + reduced 2[4Fe-4S]-[ferredoxin] + 2 ATP + 2 H2O. It functions in the pathway porphyrin-containing compound metabolism; chlorophyll biosynthesis (light-independent). In terms of biological role, component of the dark-operative protochlorophyllide reductase (DPOR) that uses Mg-ATP and reduced ferredoxin to reduce ring D of protochlorophyllide (Pchlide) to form chlorophyllide a (Chlide). This reaction is light-independent. The NB-protein (ChlN-ChlB) is the catalytic component of the complex. This chain is Light-independent protochlorophyllide reductase subunit N, found in Marchantia polymorpha (Common liverwort).